The following is a 106-amino-acid chain: UPF0060 membrane protein Smed_0659 (106 aa).

The next 3 membrane-spanning stretches (helical) occupy residues 4–24 (FAIYFLAALAEIAGCFTFWAW), 31–51 (GLWLLPGMASLAIFAWLLTMV), and 61–81 (AAYGGIYIIASLCWLWVAEGA).

Belongs to the UPF0060 family.

Its subcellular location is the cell inner membrane. The sequence is that of UPF0060 membrane protein Smed_0659 from Sinorhizobium medicae (strain WSM419) (Ensifer medicae).